Consider the following 223-residue polypeptide: Immediate early response gene 2 protein (223 aa).

Met1 is modified (N-acetylmethionine). A disordered region spans residues 63–172 (AALPSDPRLH…PPAQAEGAFP (110 aa)). Over residues 69–78 (PRLHPPREAE) the composition is skewed to basic and acidic residues. Residues 125 to 138 (SSLSDGGDAGLVPS) show a composition bias toward low complexity.

Belongs to the IER family. As to expression, expressed in activated T-cells (at protein level). Expression increases in metastatic tumor cells (at protein level).

Its subcellular location is the cytoplasm. It is found in the nucleus. Its function is as follows. DNA-binding protein that seems to act as a transcription factor. Involved in the regulation of neuronal differentiation, acts upon JNK-signaling pathway activation and plays a role in neurite outgrowth in hippocampal cells. May mediate with FIBP FGF-signaling in the establishment of laterality in the embryo. Promotes cell motility, seems to stimulate tumor metastasis. This is Immediate early response gene 2 protein from Homo sapiens (Human).